Reading from the N-terminus, the 490-residue chain is Subtilisin-like protease 8 (490 aa).

Residues 1–26 (MKGLLSLSVLPVLAYASPMIVDSIHQ) form the signal peptide. Positions 27–134 (NAAPILSSTN…YIERDSEVHT (108 aa)) are excised as a propeptide. One can recognise an Inhibitor I9 domain in the interval 43–134 (SYIVVFKKGV…YIERDSEVHT (92 aa)). The 307-residue stretch at 144-450 (PWGLARISHR…GGSDDYKKII (307 aa)) folds into the Peptidase S8 domain. Catalysis depends on charge relay system residues Asp-180 and His-212. Residue Asn-282 is glycosylated (N-linked (GlcNAc...) asparagine). Ser-378 acts as the Charge relay system in catalysis. A glycan (N-linked (GlcNAc...) asparagine) is linked at Asn-456.

It belongs to the peptidase S8 family.

The protein resides in the secreted. Functionally, secreted subtilisin-like serine protease with keratinolytic activity that contributes to pathogenicity. The sequence is that of Subtilisin-like protease 8 (SUB8) from Trichophyton verrucosum (strain HKI 0517).